Reading from the N-terminus, the 156-residue chain is Cyanate hydratase (156 aa).

Active-site residues include arginine 96, glutamate 99, and serine 122.

Belongs to the cyanase family.

It carries out the reaction cyanate + hydrogencarbonate + 3 H(+) = NH4(+) + 2 CO2. Its function is as follows. Catalyzes the reaction of cyanate with bicarbonate to produce ammonia and carbon dioxide. The sequence is that of Cyanate hydratase from Pseudomonas aeruginosa (strain LESB58).